Here is a 218-residue protein sequence, read N- to C-terminus: Redox-sensing transcriptional repressor Rex (218 aa).

Residues W25–V64 constitute a DNA-binding region (H-T-H motif). Position 99–104 (G99–G104) interacts with NAD(+).

This sequence belongs to the transcriptional regulatory Rex family. In terms of assembly, homodimer.

It is found in the cytoplasm. Its function is as follows. Modulates transcription in response to changes in cellular NADH/NAD(+) redox state. This Porphyromonas gingivalis (strain ATCC 33277 / DSM 20709 / CIP 103683 / JCM 12257 / NCTC 11834 / 2561) protein is Redox-sensing transcriptional repressor Rex.